The following is a 58-amino-acid chain: Dortoxin (58 aa).

The 56-residue stretch at 3–58 (VPGNYPLDKDGNTYTCLKLGENKDCQKVCKLHGVQYGYCYAFECWCKEYLDDKDSV) folds into the LCN-type CS-alpha/beta domain. Cystine bridges form between C18/C41, C27/C46, and C31/C48.

In terms of tissue distribution, expressed by the venom gland.

It is found in the secreted. Its function is as follows. Binds to sodium channels (Nav) and affects the channel activation process. In mice, causes hyperactivity that persists until death. This chain is Dortoxin, found in Parabuthus transvaalicus (Transvaal thick-tailed scorpion).